A 1258-amino-acid polypeptide reads, in one-letter code: Trafficking protein particle complex subunit 10 (1258 aa).

Ser-707 bears the Phosphoserine mark. 2 disordered regions span residues 888–913 (PASGGDTSVPGTPELHRKQKDSQRAG) and 1201–1222 (SSLRSRGSTHSTSSSEHKGLPM). The segment covering 901-911 (ELHRKQKDSQR) has biased composition (basic and acidic residues). Residues 1201–1214 (SSLRSRGSTHSTSS) are compositionally biased toward low complexity.

The protein belongs to the TRAPPC10 family. As to quaternary structure, specific component of the multisubunit TRAPP II complex, which includes at least TRAPPC1, TRAPPC2, TRAPPC3, TRAPPC4, TRAPPC5, TRAPPC6A/B, TRAPPC9, TRAPPC10 and TRAPPC14. TRAPPC9, TRAPPC10 and TRAPPC14 are specific subunits of the TRAPP II complex. Interacts with TRAPPC14.

It is found in the golgi apparatus. Its subcellular location is the cis-Golgi network. Specific subunit of the TRAPP (transport protein particle) II complex, a highly conserved vesicle tethering complex that functions in late Golgi trafficking as a membrane tether. The sequence is that of Trafficking protein particle complex subunit 10 (Trappc10) from Mus musculus (Mouse).